A 62-amino-acid chain; its full sequence is Arabinogalactan protein 40 (62 aa).

The signal sequence occupies residues 1 to 22 (MEMKNIFVALFISAVLVSSVSA). 4-hydroxyproline occurs at positions 28, 30, and 32. Pro-28, Pro-30, and Pro-32 each carry an O-linked (Ara...) hydroxyproline glycan. A lipid anchor (GPI-anchor amidated serine) is attached at Ser-35. Positions 36-62 (SASTVAFPVVGSIVAASLSAFLALLLQ) are cleaved as a propeptide — removed in mature form.

It belongs to the AG-peptide AGP family. In terms of processing, contains 4-hydroxyproline; hydroxylated on Pro-28, Pro-30 and Pro-32. Post-translationally, O-glycosylated on hydroxyprolines; noncontiguous hydroxylproline residues are glycosylated with arabinogalactan.

It is found in the cell membrane. Proteoglycan that seems to be implicated in diverse developmental roles such as differentiation, cell-cell recognition, embryogenesis and programmed cell death. This chain is Arabinogalactan protein 40, found in Arabidopsis thaliana (Mouse-ear cress).